We begin with the raw amino-acid sequence, 148 residues long: Protein F15 (148 aa).

The protein belongs to the poxviridae F15 protein family.

The protein is Protein F15 of Fowlpox virus (strain NVSL) (FPV).